Reading from the N-terminus, the 159-residue chain is Histone H2A (159 aa).

Residues 1–10 (MDSTGTGAGG) are compositionally biased toward gly residues. Disordered regions lie at residues 1–31 (MDST…SVSR) and 133–159 (KTAE…PKKA). 2 stretches are compositionally biased toward basic residues: residues 11–29 (KGKK…KKSV) and 149–159 (PKKAAKSPKKA). 2 short sequence motifs (SPKK motif) span residues 148–151 (SPKK) and 155–158 (SPKK).

This sequence belongs to the histone H2A family. In terms of assembly, the nucleosome is a histone octamer containing two molecules each of H2A, H2B, H3 and H4 assembled in one H3-H4 heterotetramer and two H2A-H2B heterodimers. The octamer wraps approximately 147 bp of DNA.

The protein localises to the nucleus. The protein resides in the chromosome. In terms of biological role, core component of nucleosome. Nucleosomes wrap and compact DNA into chromatin, limiting DNA accessibility to the cellular machineries which require DNA as a template. Histones thereby play a central role in transcription regulation, DNA repair, DNA replication and chromosomal stability. DNA accessibility is regulated via a complex set of post-translational modifications of histones, also called histone code, and nucleosome remodeling. The chain is Histone H2A from Zea mays (Maize).